The sequence spans 77 residues: Defensin-like protein 159 (77 aa).

The N-terminal stretch at 1–27 (MAKLSCSYFLVLILVFSAFLMVERAEG) is a signal peptide. Intrachain disulfides connect C30–C77, C40–C59, C45–C71, and C49–C73.

Belongs to the DEFL family.

The protein localises to the secreted. The sequence is that of Defensin-like protein 159 (LCR25) from Arabidopsis thaliana (Mouse-ear cress).